Here is a 455-residue protein sequence, read N- to C-terminus: Growth/differentiation factor 9 (455 aa).

The signal sequence occupies residues 1–24 (MALPNKFLLWFYCFAWLCFPVSLG). Residues 25–320 (SQASGGDAQI…GRSSHHRHRR (296 aa)) constitute a propeptide that is removed on maturation. 5 N-linked (GlcNAc...) asparagine glycosylation sites follow: Asn-106, Asn-163, Asn-236, Asn-255, and Asn-269. The tract at residues 305 to 328 (EDAAEDGRSSHHRHRRGQETVSSE) is disordered. The N-linked (GlcNAc...) asparagine glycan is linked to Asn-339. 3 disulfides stabilise this stretch: Cys-354–Cys-420, Cys-383–Cys-452, and Cys-387–Cys-454.

This sequence belongs to the TGF-beta family. As to quaternary structure, homodimer or heterodimer (Potential). But, in contrast to other members of this family, cannot be disulfide-linked. Post-translationally, phosphorylated; phosphorylation is critical for GDF9 function.

Its subcellular location is the secreted. Functionally, required for ovarian folliculogenesis. The chain is Growth/differentiation factor 9 (GDF9) from Papio anubis (Olive baboon).